Here is a 249-residue protein sequence, read N- to C-terminus: Enolase-phosphatase E1 (249 aa).

The protein belongs to the HAD-like hydrolase superfamily. MasA/MtnC family. As to quaternary structure, monomer. Mg(2+) is required as a cofactor.

The catalysed reaction is 5-methylsulfanyl-2,3-dioxopentyl phosphate + H2O = 1,2-dihydroxy-5-(methylsulfanyl)pent-1-en-3-one + phosphate. It participates in amino-acid biosynthesis; L-methionine biosynthesis via salvage pathway; L-methionine from S-methyl-5-thio-alpha-D-ribose 1-phosphate: step 3/6. The protein operates within amino-acid biosynthesis; L-methionine biosynthesis via salvage pathway; L-methionine from S-methyl-5-thio-alpha-D-ribose 1-phosphate: step 4/6. Bifunctional enzyme that catalyzes the enolization of 2,3-diketo-5-methylthiopentyl-1-phosphate (DK-MTP-1-P) into the intermediate 2-hydroxy-3-keto-5-methylthiopentenyl-1-phosphate (HK-MTPenyl-1-P), which is then dephosphorylated to form the acireductone 1,2-dihydroxy-3-keto-5-methylthiopentene (DHK-MTPene). This Pseudomonas aeruginosa (strain ATCC 15692 / DSM 22644 / CIP 104116 / JCM 14847 / LMG 12228 / 1C / PRS 101 / PAO1) protein is Enolase-phosphatase E1.